The primary structure comprises 641 residues: Frizzled-1 (641 aa).

A signal peptide spans 1 to 68; that stretch reads MAEEAVPSES…WLLEAPLLLG (68 aa). Over 69–316 the chain is Extracellular; that stretch reads VRAQPAGQVS…PEELRFSRTW (248 aa). Residues 74-99 are disordered; it reads AGQVSGPGQQRPPPPQPQQGGQQYNG. Residues 106 to 224 form the FZ domain; the sequence is PDHGYCQPIS…HGAGELCVGQ (119 aa). Intrachain disulfides connect Cys-111–Cys-172, Cys-119–Cys-165, Cys-156–Cys-192, Cys-182–Cys-221, and Cys-186–Cys-209. The N-linked (GlcNAc...) asparagine glycan is linked to Asn-125. An N-linked (GlcNAc...) asparagine glycan is attached at Asn-225. Residues 317–337 form a helical membrane-spanning segment; it reads IGIWSVLCCASTLFTVLTYLV. Topologically, residues 338–348 are cytoplasmic; that stretch reads DMRRFSYPERP. Residues 349–369 form a helical membrane-spanning segment; the sequence is IIFLSGCYTAVAVAYIAGFLL. Topologically, residues 370-396 are extracellular; it reads EDRVVCNDKFAEDGARTVAQGTKKEGC. Residues 397–417 form a helical membrane-spanning segment; that stretch reads TILFMMLYFFSMASSIWWVIL. Over 418–439 the chain is Cytoplasmic; that stretch reads SLTWFLAAGMKWGHEAIEANSQ. The helical transmembrane segment at 440–460 threads the bilayer; the sequence is YFHLAAWAVPAIKTITILALG. Over 461–483 the chain is Extracellular; it reads QVDGDVLSGVCFVGLNNVDALRG. The chain crosses the membrane as a helical span at residues 484–504; that stretch reads FVLAPLFVYLFIGTSFLLAGF. Residues 505-530 lie on the Cytoplasmic side of the membrane; the sequence is VSLFRIRTIMKHDGTKTEKLEKLMVR. The helical transmembrane segment at 531–551 threads the bilayer; it reads IGVFSVLYTVPATIVIACYFY. At 552 to 595 the chain is on the extracellular side; sequence EQAFRDQWERSWVAQSCKSYAIPCPHLQGGGGVPPHPPMSPDFT. Residues 596–616 form a helical membrane-spanning segment; that stretch reads VFMIKYLMTLIVGITSGFWIW. The Cytoplasmic portion of the chain corresponds to 617-641; that stretch reads SGKTLNSWRKFYTRLTNSKQGETTV. The short motif at 619–624 is the Lys-Thr-X-X-X-Trp motif, mediates interaction with the PDZ domain of Dvl family members element; sequence KTLNSW. Positions 639 to 641 match the PDZ-binding motif; it reads TTV.

It belongs to the G-protein coupled receptor Fz/Smo family. Interacts with MYOC. Interacts with WNT7B. In terms of processing, ubiquitinated by ZNRF3, leading to its degradation by the proteasome. In terms of tissue distribution, widely expressed. Most abundant in kidney, liver, uterus, ovary and heart. Lower levels seen in brain and intestine. Extremely low in calvaria, mammary glands and testis.

It is found in the cell membrane. In terms of biological role, receptor for Wnt proteins. Activated by WNT3A, WNT3, WNT1 and to a lesser extent WNT2, but apparently not by WNT4, WNT5A, WNT5B, WNT6 or WNT7A. Contradictory results have been reported for activation by WNT7B. Functions in the canonical Wnt/beta-catenin signaling pathway. The canonical Wnt/beta-catenin signaling pathway leads to the activation of disheveled proteins, inhibition of GSK-3 kinase, nuclear accumulation of beta-catenin and activation of Wnt target genes. A second signaling pathway involving PKC and calcium fluxes has been seen for some family members, but it is not yet clear if it represents a distinct pathway or if it can be integrated in the canonical pathway, as PKC seems to be required for Wnt-mediated inactivation of GSK-3 kinase. Both pathways seem to involve interactions with G-proteins. May be involved in transduction and intercellular transmission of polarity information during tissue morphogenesis and/or in differentiated tissues. This Rattus norvegicus (Rat) protein is Frizzled-1 (Fzd1).